Here is a 264-residue protein sequence, read N- to C-terminus: 3-methyl-2-oxobutanoate hydroxymethyltransferase (264 aa).

Mg(2+)-binding residues include D45 and D84. Residues 45–46 (DS), D84, and K112 each bind 3-methyl-2-oxobutanoate. E114 contributes to the Mg(2+) binding site. E181 (proton acceptor) is an active-site residue.

This sequence belongs to the PanB family. As to quaternary structure, homodecamer; pentamer of dimers. It depends on Mg(2+) as a cofactor.

The protein resides in the cytoplasm. The catalysed reaction is 3-methyl-2-oxobutanoate + (6R)-5,10-methylene-5,6,7,8-tetrahydrofolate + H2O = 2-dehydropantoate + (6S)-5,6,7,8-tetrahydrofolate. It participates in cofactor biosynthesis; (R)-pantothenate biosynthesis; (R)-pantoate from 3-methyl-2-oxobutanoate: step 1/2. In terms of biological role, catalyzes the reversible reaction in which hydroxymethyl group from 5,10-methylenetetrahydrofolate is transferred onto alpha-ketoisovalerate to form ketopantoate. This Vibrio atlanticus (strain LGP32) (Vibrio splendidus (strain Mel32)) protein is 3-methyl-2-oxobutanoate hydroxymethyltransferase.